The sequence spans 464 residues: ATP-dependent protease ATPase subunit HslU (464 aa).

ATP is bound by residues I22, 64 to 69 (GVGKTE), D275, E340, and R412.

The protein belongs to the ClpX chaperone family. HslU subfamily. A double ring-shaped homohexamer of HslV is capped on each side by a ring-shaped HslU homohexamer. The assembly of the HslU/HslV complex is dependent on binding of ATP.

It localises to the cytoplasm. Functionally, ATPase subunit of a proteasome-like degradation complex; this subunit has chaperone activity. The binding of ATP and its subsequent hydrolysis by HslU are essential for unfolding of protein substrates subsequently hydrolyzed by HslV. HslU recognizes the N-terminal part of its protein substrates and unfolds these before they are guided to HslV for hydrolysis. This chain is ATP-dependent protease ATPase subunit HslU, found in Cytophaga hutchinsonii (strain ATCC 33406 / DSM 1761 / CIP 103989 / NBRC 15051 / NCIMB 9469 / D465).